Here is a 750-residue protein sequence, read N- to C-terminus: Photosystem I P700 chlorophyll a apoprotein A1 (750 aa).

Helical transmembrane passes span Val-70–Ala-93, Leu-156–His-179, Leu-195–Leu-219, Ile-291–Tyr-309, Trp-346–Tyr-369, Leu-385–Val-411, Ala-433–His-455, and Phe-531–Leu-549. Residues Cys-573 and Cys-582 each coordinate [4Fe-4S] cluster. 2 helical membrane-spanning segments follow: residues His-589–Trp-610 and Leu-664–Phe-686. His-675 lines the chlorophyll a' pocket. Residues Met-683 and Tyr-691 each contribute to the chlorophyll a site. Trp-692 contributes to the phylloquinone binding site. Residues Ala-724–Ala-744 form a helical membrane-spanning segment.

This sequence belongs to the PsaA/PsaB family. As to quaternary structure, the PsaA/B heterodimer binds the P700 chlorophyll special pair and subsequent electron acceptors. PSI consists of a core antenna complex that captures photons, and an electron transfer chain that converts photonic excitation into a charge separation. The eukaryotic PSI reaction center is composed of at least 11 subunits. It depends on P700 is a chlorophyll a/chlorophyll a' dimer, A0 is one or more chlorophyll a, A1 is one or both phylloquinones and FX is a shared 4Fe-4S iron-sulfur center. as a cofactor.

It localises to the plastid. The protein resides in the chloroplast thylakoid membrane. The catalysed reaction is reduced [plastocyanin] + hnu + oxidized [2Fe-2S]-[ferredoxin] = oxidized [plastocyanin] + reduced [2Fe-2S]-[ferredoxin]. Functionally, psaA and PsaB bind P700, the primary electron donor of photosystem I (PSI), as well as the electron acceptors A0, A1 and FX. PSI is a plastocyanin-ferredoxin oxidoreductase, converting photonic excitation into a charge separation, which transfers an electron from the donor P700 chlorophyll pair to the spectroscopically characterized acceptors A0, A1, FX, FA and FB in turn. Oxidized P700 is reduced on the lumenal side of the thylakoid membrane by plastocyanin. This is Photosystem I P700 chlorophyll a apoprotein A1 from Amborella trichopoda.